We begin with the raw amino-acid sequence, 496 residues long: FAD-linked oxidoreductase AFUA_1G00980 (496 aa).

Residues 1–21 form the signal peptide; that stretch reads MRRATLIPLAIWVAGAAAAAA. N-linked (GlcNAc...) asparagine glycans are attached at residues N49, N122, N205, N258, N344, N351, N371, and N382. Positions 64–243 constitute an FAD-binding PCMH-type domain; sequence MAPTYAVSVR…VEAVYQVTDL (180 aa).

The protein belongs to the oxygen-dependent FAD-linked oxidoreductase family. Requires FAD as cofactor.

Functionally, FAD-linked oxidoreductase; part of the gene cluster that mediates the biosynthesis of fumigermin that inhibits germination of spores of the inducing S.rapamycinicus, and thus helps the fungus to defend resources in the shared habitat against a bacterial competitor. The partially reducing polyketide synthase fngA alone is sufficient for the production of fumigermin. FgnA catalyzes the condensation of 3 malonyl-CoA units to an acetyl-CoA starter, and 3 methylations to yield fumigermin. It is remarkable that the five cluster genes including fgnA are conserved in distantly related fungi, supporting the assumption of a fumigermin cluster; it is thus possible that originally all five genes were functional, but that the genes encoding tailoring enzymes became inactive from mutations, similar to the case of the fgnA gene in strains A1163 and Af293. In Aspergillus fumigatus (strain ATCC MYA-4609 / CBS 101355 / FGSC A1100 / Af293) (Neosartorya fumigata), this protein is FAD-linked oxidoreductase AFUA_1G00980.